A 157-amino-acid polypeptide reads, in one-letter code: Class I hydrophobin rodA (157 aa).

The N-terminal stretch at 1–41 is a signal peptide; the sequence is MKFSIAAAVVAFAASVAALPPAHDSQFAGNGVGNKGNSNVK. N47 carries N-linked (GlcNAc...) asparagine glycosylation. 4 disulfide bridges follow: C57–C131, C65–C125, C66–C106, and C132–C150.

This sequence belongs to the fungal hydrophobin family. Self-assembles to form functional amyloid fibrils called rodlets. Self-assembly into fibrillar rodlets occurs spontaneously at hydrophobic:hydrophilic interfaces and the rodlets further associate laterally to form amphipathic monolayers.

Its subcellular location is the secreted. It localises to the spore wall. Aerial growth, conidiation, and dispersal of filamentous fungi in the environment rely upon a capability of their secreting small amphipathic proteins called hydrophobins (HPBs) with low sequence identity. Class I can self-assemble into an outermost layer of rodlet bundles on aerial cell surfaces, conferring cellular hydrophobicity that supports fungal growth, development and dispersal; whereas Class II form highly ordered films at water-air interfaces through intermolecular interactions but contribute nothing to the rodlet structure. RodA is a class I hydrophobin that contributes to surface hydrophobicity, which is important for processes such as association of hyphae in reproductive structures, dispersal of aerial spores and adhesion of pathogens to host structures. Important for the formation of hydrophobic rodlet layers of asexually-produced spores. Promotes also biofilm formation and may enhance lignocellulose utilization via promoting a compact substrate-enzyme-fungus structure. This is Class I hydrophobin rodA from Emericella nidulans (strain FGSC A4 / ATCC 38163 / CBS 112.46 / NRRL 194 / M139) (Aspergillus nidulans).